The following is a 234-amino-acid chain: Sugar fermentation stimulation protein homolog (234 aa).

This sequence belongs to the SfsA family.

This is Sugar fermentation stimulation protein homolog from Shewanella baltica (strain OS195).